A 121-amino-acid polypeptide reads, in one-letter code: Large ribosomal subunit protein bL12 (121 aa).

This sequence belongs to the bacterial ribosomal protein bL12 family. As to quaternary structure, homodimer. Part of the ribosomal stalk of the 50S ribosomal subunit. Forms a multimeric L10(L12)X complex, where L10 forms an elongated spine to which 2 to 4 L12 dimers bind in a sequential fashion. Binds GTP-bound translation factors.

Functionally, forms part of the ribosomal stalk which helps the ribosome interact with GTP-bound translation factors. Is thus essential for accurate translation. The chain is Large ribosomal subunit protein bL12 from Baumannia cicadellinicola subsp. Homalodisca coagulata.